Consider the following 570-residue polypeptide: Molecular chaperone MKKS (570 aa).

Residue 192 to 199 coordinates ATP; sequence GHIILGKS. The substrate-binding apical domain stretch occupies residues 198–370; the sequence is KSLIVPLKGQ…FHLIPNEATI (173 aa).

Belongs to the TCP-1 chaperonin family. In terms of assembly, component of a complex composed at least of MKKS, BBS10, BBS12, TCP1, CCT2, CCT3, CCT4, CCT5 and CCT8. Interacts with STUB1. Interacts with BBS2 (via coiled coil domain). Interacts with CCDC28B. Interacts with BBS12. Interacts with SMARCC1, a component of the SWI/SNF complexes; the interaction takes place predominantly in the cytoplasm and may modulate SMARCC1 location. Interacts with DLEC1. As to expression, widely expressed in adult and fetal tissues.

The protein localises to the cytoplasm. The protein resides in the cytoskeleton. It localises to the microtubule organizing center. Its subcellular location is the centrosome. It is found in the cytosol. The protein localises to the nucleus. In terms of biological role, probable molecular chaperone that assists the folding of proteins upon ATP hydrolysis. Plays a role in the assembly of BBSome, a complex involved in ciliogenesis regulating transports vesicles to the cilia. May play a role in protein processing in limb, cardiac and reproductive system development. May play a role in cytokinesis. The polypeptide is Molecular chaperone MKKS (Homo sapiens (Human)).